The following is a 366-amino-acid chain: Putative F-box protein At1g26515 (366 aa).

Residues 1 to 20 (MKTRSKKTKTENNQEKSKEK) are disordered. Residues 8–20 (TKTENNQEKSKEK) show a composition bias toward basic and acidic residues. Residues 20–66 (KNKFDQLPLDLEIEIFRRLPLKSVARFLTLSKSCAATIRSPSFITSF) form the F-box domain.

The protein is Putative F-box protein At1g26515 of Arabidopsis thaliana (Mouse-ear cress).